We begin with the raw amino-acid sequence, 882 residues long: Valine--tRNA ligase (882 aa).

A 'HIGH' region motif is present at residues 50 to 60 (PNVTGKLHLGH). A 'KMSKS' region motif is present at residues 526 to 530 (KMSKS). Lys529 lines the ATP pocket. The stretch at 810–881 (LEALIDLDLE…VLERIETLKE (72 aa)) forms a coiled coil.

It belongs to the class-I aminoacyl-tRNA synthetase family. ValS type 1 subfamily. As to quaternary structure, monomer.

It is found in the cytoplasm. It catalyses the reaction tRNA(Val) + L-valine + ATP = L-valyl-tRNA(Val) + AMP + diphosphate. In terms of biological role, catalyzes the attachment of valine to tRNA(Val). As ValRS can inadvertently accommodate and process structurally similar amino acids such as threonine, to avoid such errors, it has a 'posttransfer' editing activity that hydrolyzes mischarged Thr-tRNA(Val) in a tRNA-dependent manner. The sequence is that of Valine--tRNA ligase from Listeria innocua serovar 6a (strain ATCC BAA-680 / CLIP 11262).